Reading from the N-terminus, the 549-residue chain is ATP synthase subunit alpha (549 aa).

Residue 172–179 (GDRKTGKT) participates in ATP binding. The segment at 513-549 (SSTGESVVPDEHVEAMDEEDLGKESVKVKKPAPQKKK) is disordered. Residues 540–549 (VKKPAPQKKK) are compositionally biased toward basic residues.

Belongs to the ATPase alpha/beta chains family. In terms of assembly, F-type ATPases have 2 components, CF(1) - the catalytic core - and CF(0) - the membrane proton channel. CF(1) has five subunits: alpha(3), beta(3), gamma(1), delta(1), epsilon(1). CF(0) has three main subunits: a(1), b(2) and c(9-12). The alpha and beta chains form an alternating ring which encloses part of the gamma chain. CF(1) is attached to CF(0) by a central stalk formed by the gamma and epsilon chains, while a peripheral stalk is formed by the delta and b chains.

It is found in the cell membrane. The enzyme catalyses ATP + H2O + 4 H(+)(in) = ADP + phosphate + 5 H(+)(out). Its function is as follows. Produces ATP from ADP in the presence of a proton gradient across the membrane. The alpha chain is a regulatory subunit. In Mycobacterium marinum (strain ATCC BAA-535 / M), this protein is ATP synthase subunit alpha.